A 285-amino-acid polypeptide reads, in one-letter code: 2-dehydro-3-deoxyphosphooctonate aldolase (285 aa).

It belongs to the KdsA family.

It localises to the cytoplasm. It carries out the reaction D-arabinose 5-phosphate + phosphoenolpyruvate + H2O = 3-deoxy-alpha-D-manno-2-octulosonate-8-phosphate + phosphate. The protein operates within carbohydrate biosynthesis; 3-deoxy-D-manno-octulosonate biosynthesis; 3-deoxy-D-manno-octulosonate from D-ribulose 5-phosphate: step 2/3. It functions in the pathway bacterial outer membrane biogenesis; lipopolysaccharide biosynthesis. This Albidiferax ferrireducens (strain ATCC BAA-621 / DSM 15236 / T118) (Rhodoferax ferrireducens) protein is 2-dehydro-3-deoxyphosphooctonate aldolase.